Reading from the N-terminus, the 284-residue chain is Bifunctional protein FolD (284 aa).

Residues 166-168 (GAS) and Ile-232 contribute to the NADP(+) site.

This sequence belongs to the tetrahydrofolate dehydrogenase/cyclohydrolase family. In terms of assembly, homodimer.

The enzyme catalyses (6R)-5,10-methylene-5,6,7,8-tetrahydrofolate + NADP(+) = (6R)-5,10-methenyltetrahydrofolate + NADPH. It carries out the reaction (6R)-5,10-methenyltetrahydrofolate + H2O = (6R)-10-formyltetrahydrofolate + H(+). It functions in the pathway one-carbon metabolism; tetrahydrofolate interconversion. Catalyzes the oxidation of 5,10-methylenetetrahydrofolate to 5,10-methenyltetrahydrofolate and then the hydrolysis of 5,10-methenyltetrahydrofolate to 10-formyltetrahydrofolate. The sequence is that of Bifunctional protein FolD from Shewanella amazonensis (strain ATCC BAA-1098 / SB2B).